The primary structure comprises 1070 residues: 3',5'-cyclic-AMP phosphodiesterase (1070 aa).

Disordered regions lie at residues 1–91, 166–215, 487–516, and 615–653; these read MSQE…KQDS, STSI…TRFQ, VPAS…LSQG, and SAGQ…RLPT. A compositionally biased stretch (low complexity) spans 51-69; it reads KQVQVQSQKFSSTSSTTKV. The segment covering 70–84 has biased composition (polar residues); it reads ATHSFSMSSSAGTTG. A compositionally biased stretch (low complexity) spans 166-210; that stretch reads STSIITSSEQRTSTSTSSSSSTRYIASGSSNLAGGNSNSASSASS. Positions 488-506 are enriched in polar residues; the sequence is PASNKSRRPNQSSSASRSG. The PDEase domain occupies 656-985; that stretch reads VETPRENELG…DYYQSMIPPS (330 aa). The active-site Proton donor is H732. 732-736 is a binding site for 3',5'-cyclic AMP; that stretch reads HNSLH. A divalent metal cation contacts are provided by H736, H772, D773, and D890. D773, D890, and Q941 together coordinate 3',5'-cyclic AMP. Over residues 1007–1024 the composition is skewed to acidic residues; the sequence is EESDQENLAELEEGDESG. Residues 1007–1070 are disordered; it reads EESDQENLAE…CQNQPQHGGM (64 aa). Over residues 1025–1042 the composition is skewed to low complexity; that stretch reads GESTTTGTTGTTAASALS. Gly residues predominate over residues 1043–1054; it reads GAGGGGGGGGGM. Residues 1060–1070 are compositionally biased toward polar residues; that stretch reads GCQNQPQHGGM.

This sequence belongs to the cyclic nucleotide phosphodiesterase family. PDE4 subfamily. Monomer. It depends on a divalent metal cation as a cofactor.

The catalysed reaction is 3',5'-cyclic AMP + H2O = AMP + H(+). Its pathway is purine metabolism; 3',5'-cyclic AMP degradation; AMP from 3',5'-cyclic AMP: step 1/1. Functionally, hydrolyzes the second messenger cAMP, which is a key regulator of many important physiological processes. Vital for female fertility. Required for learning/memory. In Drosophila melanogaster (Fruit fly), this protein is 3',5'-cyclic-AMP phosphodiesterase (dnc).